The primary structure comprises 375 residues: Succinyl-diaminopimelate desuccinylase (375 aa).

His-66 provides a ligand contact to Zn(2+). Asp-68 is an active-site residue. Asp-99 lines the Zn(2+) pocket. Glu-133 functions as the Proton acceptor in the catalytic mechanism. Zn(2+) is bound by residues Glu-134, Glu-162, and His-348.

This sequence belongs to the peptidase M20A family. DapE subfamily. Homodimer. Requires Zn(2+) as cofactor. The cofactor is Co(2+).

It carries out the reaction N-succinyl-(2S,6S)-2,6-diaminopimelate + H2O = (2S,6S)-2,6-diaminopimelate + succinate. The protein operates within amino-acid biosynthesis; L-lysine biosynthesis via DAP pathway; LL-2,6-diaminopimelate from (S)-tetrahydrodipicolinate (succinylase route): step 3/3. In terms of biological role, catalyzes the hydrolysis of N-succinyl-L,L-diaminopimelic acid (SDAP), forming succinate and LL-2,6-diaminopimelate (DAP), an intermediate involved in the bacterial biosynthesis of lysine and meso-diaminopimelic acid, an essential component of bacterial cell walls. This Alkalilimnicola ehrlichii (strain ATCC BAA-1101 / DSM 17681 / MLHE-1) protein is Succinyl-diaminopimelate desuccinylase.